Here is a 102-residue protein sequence, read N- to C-terminus: Urease subunit beta (102 aa).

This sequence belongs to the urease beta subunit family. In terms of assembly, heterotrimer of UreA (gamma), UreB (beta) and UreC (alpha) subunits. Three heterotrimers associate to form the active enzyme.

The protein localises to the cytoplasm. It carries out the reaction urea + 2 H2O + H(+) = hydrogencarbonate + 2 NH4(+). Its pathway is nitrogen metabolism; urea degradation; CO(2) and NH(3) from urea (urease route): step 1/1. The chain is Urease subunit beta from Pseudomonas savastanoi pv. phaseolicola (strain 1448A / Race 6) (Pseudomonas syringae pv. phaseolicola (strain 1448A / Race 6)).